Here is a 464-residue protein sequence, read N- to C-terminus: Cytochrome P450 85A1 (464 aa).

Residues 2–22 (AFFLIFLSSFFGLCIFCTALL) form a helical membrane-spanning segment. Heme is bound at residue cysteine 414.

The protein belongs to the cytochrome P450 family. Heme serves as cofactor. Expressed in sub-meristematic regions of shoot and root apexes, in zones undergoing lateral root formation, in fruits, and in all flower parts, with a high expression in young flower buds and at the joint in the pedicel.

The protein resides in the membrane. The catalysed reaction is 6-deoxocastasterone + reduced [NADPH--hemoprotein reductase] + O2 = 6alpha-hydroxycastasterone + oxidized [NADPH--hemoprotein reductase] + H2O + H(+). It carries out the reaction 6alpha-hydroxycastasterone + reduced [NADPH--hemoprotein reductase] + O2 = castasterone + oxidized [NADPH--hemoprotein reductase] + 2 H2O + H(+). The enzyme catalyses 6-deoxocastasterone + 2 reduced [NADPH--hemoprotein reductase] + 2 O2 = castasterone + 2 oxidized [NADPH--hemoprotein reductase] + 3 H2O + 2 H(+). It functions in the pathway plant hormone biosynthesis; brassinosteroid biosynthesis. Functionally, catalyzes the C6-oxidation step in brassinosteroids biosynthesis. Converts 6-deoxocastasterone (6-deoxoCS) to castasterone (CS). May also convert 6-deoxoteasterone (6-deoxoTE) to teasterone (TE), 3-dehydro-6-deoxoteasterone (6-deoxo3DT, 6-deoxo3DHT) to 3-dehydroteasterone (3DT, 3-DHT), and 6-deoxotyphasterol (6-deoxoTY) to typhasterol (TY), but not castasterone (CS) to brassinolide (BL). This chain is Cytochrome P450 85A1, found in Solanum lycopersicum (Tomato).